The sequence spans 326 residues: ELMO domain-containing protein 1 (326 aa).

An ELMO domain is found at 133–306 (QHEEMLLKLW…KFRKRIIKQL (174 aa)).

Functionally, acts as a GTPase-activating protein (GAP) toward guanine nucleotide exchange factors like ARL2, ARL3, ARF1 and ARF6, but not for GTPases outside the Arf family. This Mus musculus (Mouse) protein is ELMO domain-containing protein 1 (Elmod1).